The primary structure comprises 292 residues: 4-hydroxy-tetrahydrodipicolinate synthase (292 aa).

Thr-45 serves as a coordination point for pyruvate. The active-site Proton donor/acceptor is the Tyr-133. Catalysis depends on Lys-161, which acts as the Schiff-base intermediate with substrate. Ile-203 contributes to the pyruvate binding site.

This sequence belongs to the DapA family. Homotetramer; dimer of dimers.

It localises to the cytoplasm. The enzyme catalyses L-aspartate 4-semialdehyde + pyruvate = (2S,4S)-4-hydroxy-2,3,4,5-tetrahydrodipicolinate + H2O + H(+). The protein operates within amino-acid biosynthesis; L-lysine biosynthesis via DAP pathway; (S)-tetrahydrodipicolinate from L-aspartate: step 3/4. In terms of biological role, catalyzes the condensation of (S)-aspartate-beta-semialdehyde [(S)-ASA] and pyruvate to 4-hydroxy-tetrahydrodipicolinate (HTPA). This is 4-hydroxy-tetrahydrodipicolinate synthase from Azoarcus sp. (strain BH72).